A 270-amino-acid polypeptide reads, in one-letter code: Photosystem I chlorophyll a/b-binding protein 6, chloroplastic (270 aa).

The N-terminal 33 residues, 1–33 (MAFAIASALTSTLTLSTSRVQNPTQRRPHVAST), are a transit peptide targeting the chloroplast. The disordered stretch occupies residues 16 to 36 (STSRVQNPTQRRPHVASTSST). The span at 19-36 (RVQNPTQRRPHVASTSST) shows a compositional bias: polar residues. Position 68 (Trp-68) interacts with chlorophyll b. 2 residues coordinate chlorophyll a: Phe-88 and Glu-107. Arg-112 lines the chlorophyll b pocket. Residues 146 to 164 (YFADSTTLFVAQMVLMGWA) traverse the membrane as a helical segment. Chlorophyll b contacts are provided by Glu-165 and Arg-168. Chlorophyll a-binding residues include Lys-221, Glu-222, Asn-225, Arg-227, Gln-239, and His-254. The helical transmembrane segment at 228-244 (LAMLAFLGFCFQATYTS) threads the bilayer.

It belongs to the light-harvesting chlorophyll a/b-binding (LHC) protein family. As to quaternary structure, the LHC complex consists of chlorophyll a-b binding proteins. Homodimer. Binds pigments. Element of the NAD(P)H dehydrogenase-photosystem I supercomplex (NDH-PSI). It depends on Binds at least 14 chlorophylls (8 Chl-a and 6 Chl-b) and carotenoids such as lutein and neoxanthin. as a cofactor. Photoregulated by reversible phosphorylation of its threonine residues.

It is found in the plastid. Its subcellular location is the chloroplast thylakoid membrane. Its function is as follows. The light-harvesting complex (LHC) functions as a light receptor, it captures and delivers excitation energy to photosystems with which it is closely associated. Seems involved in the function of the photosystem I in low light conditions, when other LHCA proteins are less abundant. Required, together with LHCA5, for the formation of a full-size NAD(P)H dehydrogenase-photosystem I supercomplex (NDH-PSI) that triggers cyclic and chlororespiratory electron transport in chloroplast thylakoids, especially under stress conditions (e.g. increased light intensity). In Arabidopsis thaliana (Mouse-ear cress), this protein is Photosystem I chlorophyll a/b-binding protein 6, chloroplastic.